The chain runs to 626 residues: Chaperone protein HtpG (626 aa).

Residues 1 to 341 (MIKKEFKAES…SEDLSLNISR (341 aa)) form an a; substrate-binding region. Residues 342–552 (EMLQHDRQLK…DGDVTIEMEK (211 aa)) are b. Residues 553 to 626 (ILSAMPNNQE…FTNDICKLMS (74 aa)) form a c region.

This sequence belongs to the heat shock protein 90 family. In terms of assembly, homodimer.

It localises to the cytoplasm. In terms of biological role, molecular chaperone. Has ATPase activity. This chain is Chaperone protein HtpG, found in Alkaliphilus metalliredigens (strain QYMF).